The chain runs to 300 residues: Putative S-adenosyl-L-methionine-dependent methyltransferase MUL_0817 (300 aa).

Residues D127 and 156–157 (DL) contribute to the S-adenosyl-L-methionine site.

This sequence belongs to the UPF0677 family.

Functionally, exhibits S-adenosyl-L-methionine-dependent methyltransferase activity. This is Putative S-adenosyl-L-methionine-dependent methyltransferase MUL_0817 from Mycobacterium ulcerans (strain Agy99).